Here is an 82-residue protein sequence, read N- to C-terminus: YHLGGPPVTLKLPPGTPAGRTMRARGKGAVRKDGTRGDLLVTVDVAVPQHLSSEAREALEAYRKATADEDPRAELFKAAKGA.

Residues 1–33 are disordered; sequence YHLGGPPVTLKLPPGTPAGRTMRARGKGAVRKD.

It belongs to the DnaJ family. As to quaternary structure, homodimer. Zn(2+) is required as a cofactor.

The protein resides in the cytoplasm. Its function is as follows. Participates actively in the response to hyperosmotic and heat shock by preventing the aggregation of stress-denatured proteins and by disaggregating proteins, also in an autonomous, DnaK-independent fashion. Unfolded proteins bind initially to DnaJ; upon interaction with the DnaJ-bound protein, DnaK hydrolyzes its bound ATP, resulting in the formation of a stable complex. GrpE releases ADP from DnaK; ATP binding to DnaK triggers the release of the substrate protein, thus completing the reaction cycle. Several rounds of ATP-dependent interactions between DnaJ, DnaK and GrpE are required for fully efficient folding. Also involved, together with DnaK and GrpE, in the DNA replication of plasmids through activation of initiation proteins. The polypeptide is Chaperone protein DnaJ 1 (dnaJ1) (Streptomyces albus G).